The chain runs to 292 residues: Rab effector Noc2 (292 aa).

Residues 41-158 enclose the RabBD domain; the sequence is QRKSQSLSPA…KRSGAWFYKG (118 aa). Residues 89–146 form an FYVE-type zinc finger; the sequence is GNGLSQCLLCGEVLGFLGSSSVFCKDCRKKVCTKCGIEASPSQKRPLWLCKICSEQRE. Cysteine 95, cysteine 98, cysteine 112, cysteine 115, cysteine 120, cysteine 123, cysteine 138, and cysteine 141 together coordinate Zn(2+). A disordered region spans residues 175 to 292; sequence PSFRPLPVEP…RTLAGPRGPR (118 aa). Residues 221–235 are compositionally biased toward basic and acidic residues; it reads LDDRLRPAGVRDPKG. Serine 248 is modified (phosphoserine). Positions 257-269 are enriched in low complexity; that stretch reads ASCLSGSQSSLAS.

As to quaternary structure, recruited to dense-core vesicles through specific interaction with RAB27A in endocrine cells. Interacts with RAB3A, RAB3B, RAB3C and RAB3D. Interacts with ZYX.

The protein resides in the cytoplasm. It localises to the cytoplasmic vesicle. Its subcellular location is the secretory vesicle membrane. In terms of biological role, rab GTPase effector involved in the late steps of regulated exocytosis, both in endocrine and exocrine cells. The polypeptide is Rab effector Noc2 (RPH3AL) (Bos taurus (Bovine)).